A 117-amino-acid polypeptide reads, in one-letter code: NADH-ubiquinone oxidoreductase chain 3 (117 aa).

The next 3 membrane-spanning stretches (helical) occupy residues 4 to 24 (IIFI…LASI), 60 to 80 (ITII…MIII), and 86 to 106 (IMIW…GLYH).

This sequence belongs to the complex I subunit 3 family.

The protein localises to the mitochondrion membrane. It carries out the reaction a ubiquinone + NADH + 5 H(+)(in) = a ubiquinol + NAD(+) + 4 H(+)(out). Its function is as follows. Core subunit of the mitochondrial membrane respiratory chain NADH dehydrogenase (Complex I) that is believed to belong to the minimal assembly required for catalysis. Complex I functions in the transfer of electrons from NADH to the respiratory chain. The immediate electron acceptor for the enzyme is believed to be ubiquinone. This chain is NADH-ubiquinone oxidoreductase chain 3 (mt:ND3), found in Drosophila melanogaster (Fruit fly).